A 447-amino-acid polypeptide reads, in one-letter code: Phosphoglucosamine mutase (447 aa).

Serine 103 functions as the Phosphoserine intermediate in the catalytic mechanism. Residues serine 103, aspartate 242, aspartate 244, and aspartate 246 each contribute to the Mg(2+) site. At serine 103 the chain carries Phosphoserine.

Belongs to the phosphohexose mutase family. It depends on Mg(2+) as a cofactor. Post-translationally, activated by phosphorylation.

It carries out the reaction alpha-D-glucosamine 1-phosphate = D-glucosamine 6-phosphate. Catalyzes the conversion of glucosamine-6-phosphate to glucosamine-1-phosphate. This Dinoroseobacter shibae (strain DSM 16493 / NCIMB 14021 / DFL 12) protein is Phosphoglucosamine mutase.